A 406-amino-acid chain; its full sequence is HEAT repeat-containing taxis protein OE_2401F (406 aa).

HEAT repeat units lie at residues 7 to 41 (LERS…NLDE), 42 to 78 (PEPE…VDAL), 90 to 127 (GATW…EDTA), 153 to 184 (IEQP…LGRL), 185 to 215 (TTEQ…LGRF), 216 to 252 (ETAE…NVPP), and 370 to 406 (VGGD…GGKT).

Interacts with chemotaxis (Che) proteins.

In terms of biological role, involved in taxis signal transduction. Essential for the ability to control the direction of flagellar rotation. May have a role between CheY and the flagellum. In Halobacterium salinarum (strain ATCC 29341 / DSM 671 / R1), this protein is HEAT repeat-containing taxis protein OE_2401F.